The primary structure comprises 51 residues: U-Asilidin(1)-Mar1a (51 aa).

Residues 1-23 (MANYIEVFSVLAIIFATVLAALA) form the signal peptide. 3 disulfides stabilise this stretch: Cys26/Cys40, Cys33/Cys44, and Cys39/Cys49.

This sequence belongs to the asilidin-1 family. In terms of tissue distribution, expressed by the venom gland. Is the most highly expressed peptide and is around 3000 times higher expressed in the thoracic glands compared to its body tissues.

It is found in the secreted. Its function is as follows. Induces neurotoxic effect on honeybees, including slow movements, disorientation and paralysis. Since it provokes similar symptoms than omega-atracotoxin, it is probable that it acts in the same way by inhibiting voltage-gated calcium channels. This is U-Asilidin(1)-Mar1a from Machimus arthriticus (Breck robberfly).